Reading from the N-terminus, the 374-residue chain is Ras-related GTP-binding protein B (374 aa).

Met1 is modified (N-acetylmethionine). The span at 1–15 (MEESDSEKKTEKENV) shows a compositional bias: basic and acidic residues. Residues 1 to 30 (MEESDSEKKTEKENVGPKVEPPLGEPEGSL) form a disordered region. GTP-binding residues include Ser49 and Gly50. Positions 50, 51, 52, 53, 54, 55, 69, and 75 each coordinate GDP. 8 residues coordinate GTP: Gly52, Lys53, Thr54, Ser55, Thr69, Thr75, Gly126, and His188. GDP contacts are provided by His188 and Asp191. Residue Lys203 forms a Glycyl lysine isopeptide (Lys-Gly) (interchain with G-Cter in ubiquitin) linkage. Leu209 and Ile225 together coordinate GDP. Position 225 (Ile225) interacts with GTP. Glycyl lysine isopeptide (Lys-Gly) (interchain with G-Cter in ubiquitin) cross-links involve residues Lys281, Lys291, and Lys305.

Belongs to the GTR/RAG GTP-binding protein family. Interacts with RRAGC and RRAGD; heterodimerization stabilizes RRAG proteins. The GTP-bound form of RRAGB (in complex with the GDP-bound form of RRAGC or RRAGD) interacts with RPTOR, thereby promoting recruitment of mTORC1 to the lysosomes. Component of the lysosomal folliculin complex (LFC), composed of FLCN, FNIP1 (or FNIP2), RagA/RRAGA or RagB/RRAGB GDP-bound, RagC/RRAGC or RagD/RRAGD GTP-bound, and Ragulator. Interacts with SH3BP4; the interaction with this negative regulator is most probably direct, preferentially occurs with the inactive GDP-bound form of RRAGB, is negatively regulated by amino acids and prevents interaction with RPTOR. Interacts with the GATOR1 complex; inactivates RRAGB. The Rag heterodimer interacts with SLC38A9; the probable amino acid sensor. Interacts with SESN1, SESN2 and SESN3.

Its subcellular location is the cytoplasm. The protein resides in the lysosome membrane. It catalyses the reaction GTP + H2O = GDP + phosphate + H(+). With respect to regulation, the activation of GTP-binding proteins is generally mediated by a guanine exchange factor (GEF), while inactivation through hydrolysis of bound GTP is catalyzed by a GTPase activating protein (GAP). The Ragulator complex functions as a GEF and promotes the active GTP-bound form. The GATOR1 complex functions as a GAP and stimulates RRAGB GTPase activity to turn it into its inactive GDP-bound form, preventing mTORC1 recruitment and activation. Functionally, guanine nucleotide-binding protein that plays a crucial role in the cellular response to amino acid availability through regulation of the mTORC1 signaling cascade. Forms heterodimeric Rag complexes with RagC/RRAGC or RagD/RRAGD and cycles between an inactive GDP-bound and an active GTP-bound form: RagB/RRAGB is in its active form when GTP-bound RagB/RRAGB forms a complex with GDP-bound RagC/RRAGC (or RagD/RRAGD) and in an inactive form when GDP-bound RagB/RRAGB heterodimerizes with GTP-bound RagC/RRAGC (or RagD/RRAGD). In its GTP-bound active form, promotes the recruitment of mTORC1 to the lysosomes and its subsequent activation by the GTPase RHEB. Involved in the RCC1/Ran-GTPase pathway. The sequence is that of Ras-related GTP-binding protein B from Mus musculus (Mouse).